We begin with the raw amino-acid sequence, 507 residues long: Peroxisomal catalase (507 aa).

Active-site residues include H65 and N138. Y348 lines the heme pocket. A Microbody targeting signal motif is present at residues 505 to 507; that stretch reads SKI.

Belongs to the catalase family. As to quaternary structure, homotetramer. Requires heme as cofactor.

It localises to the peroxisome matrix. It catalyses the reaction 2 H2O2 = O2 + 2 H2O. In terms of biological role, catalyzes the degradation of hydrogen peroxide (H(2)O(2)) generated by peroxisomal oxidases to water and oxygen, thereby protecting cells from the toxic effects of hydrogen peroxide. The sequence is that of Peroxisomal catalase (PXP9) from Pichia angusta (Yeast).